We begin with the raw amino-acid sequence, 697 residues long: uncharacterized protein (697 aa).

A coiled-coil region spans residues 516 to 545; sequence ADQSQNDVVALSSRIDRLTQEVVALQNSEK.

This is an uncharacterized protein from Callospermophilus lateralis (Golden-mantled ground squirrel).